Here is a 75-residue protein sequence, read N- to C-terminus: Small ribosomal subunit protein bS18 (75 aa).

This sequence belongs to the bacterial ribosomal protein bS18 family. Part of the 30S ribosomal subunit. Forms a tight heterodimer with protein bS6.

Its function is as follows. Binds as a heterodimer with protein bS6 to the central domain of the 16S rRNA, where it helps stabilize the platform of the 30S subunit. In Pectobacterium atrosepticum (strain SCRI 1043 / ATCC BAA-672) (Erwinia carotovora subsp. atroseptica), this protein is Small ribosomal subunit protein bS18.